We begin with the raw amino-acid sequence, 897 residues long: Serine/threonine-protein kinase ATG1 (897 aa).

Residues 24–325 (YTAEKEIGKG…FEEFFANKVV (302 aa)) enclose the Protein kinase domain. ATP-binding positions include 30–38 (IGKGSFATV) and K54. The residue at position 34 (S34) is a Phosphoserine. A Phosphothreonine modification is found at T129. The active-site Proton acceptor is D172. Residue T226 is modified to Phosphothreonine; by autocatalysis. Phosphoserine is present on residues S304, S365, and S390. The short motif at 429 to 432 (YVVV) is the LIR element. Positions 490–509 (LLRATSSSSGGSDGSRRPSL) are disordered. Phosphoserine; by PKA occurs at positions 508 and 515. Phosphoserine is present on residues S533, S551, and S552. T590 carries the post-translational modification Phosphothreonine. 9 positions are modified to phosphoserine: S621, S635, S638, S647, S677, S680, S683, S769, and S783. The segment at 880–886 (DSIANRL) is required for Cvt trafficking.

It belongs to the protein kinase superfamily. Ser/Thr protein kinase family. APG1/unc-51/ULK1 subfamily. As to quaternary structure, homodimer. Dimerization requires the presence of ATG13. Forms a ternary complex with ATG13 and ATG17. Also interacts with ATG11. Post-translationally, autophosphorylated at Thr-226 and Ser-390. The phosphorylation state may play a role in the induction of protein degradation upon starvation. Phosphorylation at Thr-226 within the activation loop is required for protein kinase activity whereas phosphorylation at Ser-34 leads to inhibition of kinase activity. Phosphorylation of Ser-508 and Ser-515 by PKA is required to induce autophagy but not for kinase activity.

Its subcellular location is the cytoplasm. The protein localises to the preautophagosomal structure membrane. The catalysed reaction is L-seryl-[protein] + ATP = O-phospho-L-seryl-[protein] + ADP + H(+). It carries out the reaction L-threonyl-[protein] + ATP = O-phospho-L-threonyl-[protein] + ADP + H(+). With respect to regulation, activated by hypophosphorylated form of ATG13 (present in nitrogen starvation conditions). Also activated by autophopsphorylation of Thr-226 and inhibited by phosphorylation of Ser-34. Its function is as follows. Serine/threonine protein kinase involved in the cytoplasm to vacuole transport (Cvt) and found to be essential in autophagy, where it is required for the formation of autophagosomes. Involved in the clearance of protein aggregates which cannot be efficiently cleared by the proteasome. Required for selective autophagic degradation of the nucleus (nucleophagy) as well as for mitophagy which contributes to regulate mitochondrial quantity and quality by eliminating the mitochondria to a basal level to fulfill cellular energy requirements and preventing excess ROS production. Also involved in endoplasmic reticulum-specific autophagic process, in selective removal of ER-associated degradation (ERAD) substrates. Plays a key role in ATG9 and ATG23 cycling through the pre-autophagosomal structure and is necessary to promote ATG18 binding to ATG9 through phosphorylation of ATG9. Catalyzes phosphorylation of ATG4, decreasing the interaction between ATG4 and ATG8 and impairing deconjugation of PE-conjugated forms of ATG8. Finally, ATG1 is also required for the maintenance of cell viability under starvation and for glycogen storage during stationary phase. Plays a role in genome stability through suppression of abnormal mitosis under starvation, and in regulation of filamentous growth. This chain is Serine/threonine-protein kinase ATG1, found in Saccharomyces cerevisiae (strain YJM789) (Baker's yeast).